A 953-amino-acid chain; its full sequence is Isoleucine--tRNA ligase (953 aa).

The 'HIGH' region motif lies at 57–67 (PYANGDIHIGH). Glu-582 contributes to the L-isoleucyl-5'-AMP binding site. Residues 623 to 627 (KMSKS) carry the 'KMSKS' region motif. Position 626 (Lys-626) interacts with ATP. Residues Cys-916, Cys-919, Cys-936, and Cys-939 each coordinate Zn(2+).

Belongs to the class-I aminoacyl-tRNA synthetase family. IleS type 1 subfamily. As to quaternary structure, monomer. It depends on Zn(2+) as a cofactor.

It localises to the cytoplasm. The enzyme catalyses tRNA(Ile) + L-isoleucine + ATP = L-isoleucyl-tRNA(Ile) + AMP + diphosphate. Functionally, catalyzes the attachment of isoleucine to tRNA(Ile). As IleRS can inadvertently accommodate and process structurally similar amino acids such as valine, to avoid such errors it has two additional distinct tRNA(Ile)-dependent editing activities. One activity is designated as 'pretransfer' editing and involves the hydrolysis of activated Val-AMP. The other activity is designated 'posttransfer' editing and involves deacylation of mischarged Val-tRNA(Ile). The protein is Isoleucine--tRNA ligase of Bordetella parapertussis (strain 12822 / ATCC BAA-587 / NCTC 13253).